Consider the following 170-residue polypeptide: Two-component response regulator ORR6 (170 aa).

The region spanning 51 to 170 (HVLAVDDSSV…DVSRLCSRIR (120 aa)) is the Response regulatory domain. Position 103 is a 4-aspartylphosphate (aspartate 103).

The protein belongs to the ARR family. Type-A subfamily. Two-component system major event consists of a His-to-Asp phosphorelay between a sensor histidine kinase (HK) and a response regulator (RR). In plants, the His-to-Asp phosphorelay involves an additional intermediate named Histidine-containing phosphotransfer protein (HPt). This multistep phosphorelay consists of a His-Asp-His-Asp sequential transfer of a phosphate group between first a His and an Asp of the HK protein, followed by the transfer to a conserved His of the HPt protein and finally the transfer to an Asp in the receiver domain of the RR protein. As to expression, expressed in roots, leaf blades, leaf sheaths, shoot apex, flowers and panicles.

In terms of biological role, functions as a response regulator involved in His-to-Asp phosphorelay signal transduction system. Phosphorylation of the Asp residue in the receiver domain activates the ability of the protein to promote the transcription of target genes. Type-A response regulators seem to act as negative regulators of the cytokinin signaling. This is Two-component response regulator ORR6 from Oryza sativa subsp. japonica (Rice).